We begin with the raw amino-acid sequence, 478 residues long: Argininosuccinate lyase (478 aa).

Belongs to the lyase 1 family. Argininosuccinate lyase subfamily.

The protein localises to the cytoplasm. The catalysed reaction is 2-(N(omega)-L-arginino)succinate = fumarate + L-arginine. The protein operates within amino-acid biosynthesis; L-arginine biosynthesis; L-arginine from L-ornithine and carbamoyl phosphate: step 3/3. The chain is Argininosuccinate lyase from Leptospira biflexa serovar Patoc (strain Patoc 1 / Ames).